The sequence spans 1494 residues: B-cell CLL/lymphoma 9-like protein (1494 aa).

Disordered regions lie at residues 1 to 236 (MRIL…PPSQ) and 269 to 496 (VPRA…DMGQ). Over residues 20-37 (GSPPLSPRGHCPPAPAKP) the composition is skewed to pro residues. A phosphoserine mark is found at S21 and S25. K36 bears the N6-acetyllysine mark. Polar residues-rich tracts occupy residues 45 to 70 (TNHGKTGNGGAQSQHQNVNQGPTCNL) and 85 to 96 (NQISPSNSSLKN). S88 is subject to Phosphoserine. N6-acetyllysine occurs at positions 108 and 110. Basic and acidic residues-rich tracts occupy residues 114 to 126 (ERSVSVDSGEQRE) and 134 to 153 (SEAKEVAPRSKRRCVLERKQ). A phosphoserine mark is found at S116 and S118. K137 carries the N6-acetyllysine modification. Over residues 193–207 (PGQTAQLPLSESSAP) the composition is skewed to polar residues. Composition is skewed to pro residues over residues 279-289 (KVPPTPEPLPL) and 299-322 (SQPPPLPPPPPAPGSAPPALPPEG). The segment at 302-530 (PPLPPPPPAP…QEEYYEEKRR (229 aa)) is necessary for interaction with CTNNB1. Low complexity predominate over residues 348–360 (THPNTPTAATANN). The segment covering 396–418 (LSKEQLEHRERSLQTLRDIERLL) has biased composition (basic and acidic residues). Residue S421 is modified to Phosphoserine. Phosphothreonine is present on T511. Residue R677 is modified to Asymmetric dimethylarginine. 14 positions are modified to phosphoserine: S747, S810, S912, S923, S935, S939, S944, S972, S984, S988, S994, S1001, S1007, and S1014. Disordered regions lie at residues 905–1082 (RGLG…NPLS) and 1113–1206 (ELLP…PGGP). Polar residues predominate over residues 932–957 (PTLSQVHSPLVTSPSANLKSPQTPSQ). Over residues 974–993 (QVLSSSLGVRSPTGSPSRLK) the composition is skewed to polar residues. Polar residues predominate over residues 1016–1035 (GVSQNKQPPLSINSSSTLGN). Low complexity predominate over residues 1046-1059 (PRNSSSAPPANPSS). Positions 1060–1082 (GLMNPSLPFTSSPDPTPSQNPLS) are enriched in polar residues. Positions 1119 to 1129 (PLLPPPPPPQG) are enriched in pro residues. The span at 1133 to 1143 (GISNNQPNQMH) shows a compositional bias: polar residues. Positions 1165 to 1176 (HEPPPTMLPSPT) are enriched in pro residues. K1339 participates in a covalent cross-link: Glycyl lysine isopeptide (Lys-Gly) (interchain with G-Cter in SUMO2).

It belongs to the BCL9 family. Found in a complex with CDC73; CTNNB1 and PYGO1. Interacts with CTNNB1. As to expression, expressed in kidney, liver, lung, testis, brain, spleen, heart and skeletal muscle. Highly expressed in numerous colorectal tumors compared to corresponding non-cancerous tissues.

The protein localises to the nucleus. Transcriptional regulator that acts as an activator. Promotes beta-catenin transcriptional activity. Plays a role in tumorigenesis. Enhances the neoplastic transforming activity of CTNNB1. The protein is B-cell CLL/lymphoma 9-like protein (Bcl9l) of Mus musculus (Mouse).